The chain runs to 437 residues: Serine hydroxymethyltransferase (437 aa).

Residues L130 and 134 to 136 each bind (6S)-5,6,7,8-tetrahydrofolate; that span reads GHL. K239 is subject to N6-(pyridoxal phosphate)lysine.

This sequence belongs to the SHMT family. As to quaternary structure, homodimer. Pyridoxal 5'-phosphate is required as a cofactor.

It localises to the cytoplasm. It catalyses the reaction (6R)-5,10-methylene-5,6,7,8-tetrahydrofolate + glycine + H2O = (6S)-5,6,7,8-tetrahydrofolate + L-serine. Its pathway is one-carbon metabolism; tetrahydrofolate interconversion. It participates in amino-acid biosynthesis; glycine biosynthesis; glycine from L-serine: step 1/1. Catalyzes the reversible interconversion of serine and glycine with tetrahydrofolate (THF) serving as the one-carbon carrier. This reaction serves as the major source of one-carbon groups required for the biosynthesis of purines, thymidylate, methionine, and other important biomolecules. Also exhibits THF-independent aldolase activity toward beta-hydroxyamino acids, producing glycine and aldehydes, via a retro-aldol mechanism. This chain is Serine hydroxymethyltransferase, found in Bartonella quintana (strain Toulouse) (Rochalimaea quintana).